Here is a 282-residue protein sequence, read N- to C-terminus: [PSI+] induction protein 2 (282 aa).

Residues 43–63 (IIAIVGIVLACILVIWLIGGL) form a helical membrane-spanning segment. 2 N-linked (GlcNAc...) asparagine glycosylation sites follow: asparagine 91 and asparagine 132. Threonine 141 is modified (phosphothreonine). Disordered stretches follow at residues 153 to 183 (FDLE…VAPL) and 246 to 282 (LQGN…DRYY). Positions 253 to 282 (TPSSNHRSPYPTENYQSYQGYKPNQSDRYY) are enriched in polar residues. N-linked (GlcNAc...) asparagine glycosylation occurs at asparagine 276.

It localises to the membrane. In terms of biological role, not known. Seems to be able to provoque the non-Mendelian trait [PIN(+)] which is required for the de novo appearance of the [PSI(+)] prion. The sequence is that of [PSI+] induction protein 2 (PIN2) from Saccharomyces cerevisiae (strain ATCC 204508 / S288c) (Baker's yeast).